The sequence spans 303 residues: Kanosamine kinase (303 aa).

Belongs to the ROK (NagC/XylR) family.

It carries out the reaction kanosamine + ATP = D-kanosamine 6-phosphate + ADP + H(+). Its pathway is antibiotic biosynthesis; rifamycin B biosynthesis. Its activity is regulated as follows. Inhibited by Zn(2+), Cu(2+), and Fe(2+). In terms of biological role, involved in the biosynthesis of 3-amino-5-hydroxybenzoate (AHBA), a compound that then serves as the starter unit for the assembly of a polyketide during the biosynthesis of rifamycin B and other ansamycin antibiotics. Catalyzes only the phosphorylation of kanosamine to yield kanosamine 6-phosphate. The polypeptide is Kanosamine kinase (rifN) (Amycolatopsis mediterranei (strain S699) (Nocardia mediterranei)).